Reading from the N-terminus, the 124-residue chain is Superoxide reductase (124 aa).

Residues Glu-14, His-16, His-41, His-47, Cys-111, and His-114 each contribute to the Fe cation site.

Belongs to the desulfoferrodoxin family. As to quaternary structure, homotetramer. Requires Fe cation as cofactor.

It carries out the reaction reduced [rubredoxin] + superoxide + 2 H(+) = oxidized [rubredoxin] + H2O2. Its function is as follows. Uses electrons from reduced NADP, by way of rubredoxin and an oxidoreductase, to catalyze the reduction of superoxide to hydrogen peroxide. In Pyrococcus furiosus (strain ATCC 43587 / DSM 3638 / JCM 8422 / Vc1), this protein is Superoxide reductase (sorA).